A 125-amino-acid chain; its full sequence is MLVVFFLGILGLLANQILGLPTQAGGHLRSTDNPPQEELGYWCTYMESCKFCWECAHGICKNKVNKSMPLIIENSYLTSCEVSRWYNQCTYSEGNGHYHVMDCSDPVPHNRPHQLLKKIYEKEDL.

An N-terminal signal peptide occupies residues 1–29 (MLVVFFLGILGLLANQILGLPTQAGGHLR). N-linked (GlcNAc...) asparagine; by host glycosylation occurs at N65. The Prevents secretion from ER signature appears at 122 to 125 (KEDL).

Belongs to the asfivirus MGF 110 family.

It is found in the virion. It localises to the host endoplasmic reticulum-Golgi intermediate compartment. Causes the redistribution of lumenal ER protein to an enlarged ERGIC compartment. The protein is Protein MGF 110-4L of Ornithodoros (relapsing fever ticks).